Reading from the N-terminus, the 297-residue chain is Tyrosine recombinase XerC (297 aa).

The Core-binding (CB) domain maps to 1–83 (MAILDEFDEH…AVKAFTAWAK (83 aa)). In terms of domain architecture, Tyr recombinase spans 104-291 (TLPAVLRQDQ…AVSRLRVVHD (188 aa)). Catalysis depends on residues Arg148, Lys172, His243, Arg246, and His269. Tyr278 (O-(3'-phospho-DNA)-tyrosine intermediate) is an active-site residue.

This sequence belongs to the 'phage' integrase family. XerC subfamily. In terms of assembly, forms a cyclic heterotetrameric complex composed of two molecules of XerC and two molecules of XerD.

It is found in the cytoplasm. Site-specific tyrosine recombinase, which acts by catalyzing the cutting and rejoining of the recombining DNA molecules. The XerC-XerD complex is essential to convert dimers of the bacterial chromosome into monomers to permit their segregation at cell division. It also contributes to the segregational stability of plasmids. This is Tyrosine recombinase XerC from Mycobacterium leprae (strain TN).